Consider the following 252-residue polypeptide: 1-(5-phosphoribosyl)-5-[(5-phosphoribosylamino)methylideneamino] imidazole-4-carboxamide isomerase (252 aa).

Asp10 (proton acceptor) is an active-site residue. Catalysis depends on Asp129, which acts as the Proton donor.

It belongs to the HisA/HisF family.

Its subcellular location is the cytoplasm. The enzyme catalyses 1-(5-phospho-beta-D-ribosyl)-5-[(5-phospho-beta-D-ribosylamino)methylideneamino]imidazole-4-carboxamide = 5-[(5-phospho-1-deoxy-D-ribulos-1-ylimino)methylamino]-1-(5-phospho-beta-D-ribosyl)imidazole-4-carboxamide. It functions in the pathway amino-acid biosynthesis; L-histidine biosynthesis; L-histidine from 5-phospho-alpha-D-ribose 1-diphosphate: step 4/9. The polypeptide is 1-(5-phosphoribosyl)-5-[(5-phosphoribosylamino)methylideneamino] imidazole-4-carboxamide isomerase (Frankia casuarinae (strain DSM 45818 / CECT 9043 / HFP020203 / CcI3)).